Reading from the N-terminus, the 541-residue chain is Glucose-6-phosphate isomerase (541 aa).

Glu-346 functions as the Proton donor in the catalytic mechanism. Active-site residues include His-377 and Lys-506.

This sequence belongs to the GPI family.

Its subcellular location is the cytoplasm. The enzyme catalyses alpha-D-glucose 6-phosphate = beta-D-fructose 6-phosphate. It functions in the pathway carbohydrate biosynthesis; gluconeogenesis. Its pathway is carbohydrate degradation; glycolysis; D-glyceraldehyde 3-phosphate and glycerone phosphate from D-glucose: step 2/4. Its function is as follows. Catalyzes the reversible isomerization of glucose-6-phosphate to fructose-6-phosphate. In Sinorhizobium medicae (strain WSM419) (Ensifer medicae), this protein is Glucose-6-phosphate isomerase.